A 500-amino-acid polypeptide reads, in one-letter code: Aspartyl/glutamyl-tRNA(Asn/Gln) amidotransferase subunit B (500 aa).

This sequence belongs to the GatB/GatE family. GatB subfamily. Heterotrimer of A, B and C subunits.

The catalysed reaction is L-glutamyl-tRNA(Gln) + L-glutamine + ATP + H2O = L-glutaminyl-tRNA(Gln) + L-glutamate + ADP + phosphate + H(+). The enzyme catalyses L-aspartyl-tRNA(Asn) + L-glutamine + ATP + H2O = L-asparaginyl-tRNA(Asn) + L-glutamate + ADP + phosphate + 2 H(+). Functionally, allows the formation of correctly charged Asn-tRNA(Asn) or Gln-tRNA(Gln) through the transamidation of misacylated Asp-tRNA(Asn) or Glu-tRNA(Gln) in organisms which lack either or both of asparaginyl-tRNA or glutaminyl-tRNA synthetases. The reaction takes place in the presence of glutamine and ATP through an activated phospho-Asp-tRNA(Asn) or phospho-Glu-tRNA(Gln). The protein is Aspartyl/glutamyl-tRNA(Asn/Gln) amidotransferase subunit B of Thermosynechococcus vestitus (strain NIES-2133 / IAM M-273 / BP-1).